The chain runs to 375 residues: D-apiose dehydrogenase (375 aa).

Position 29-30 (29-30 (FF)) interacts with NAD(+). Positions 38, 39, 41, and 44 each coordinate Mg(2+). Residues Asp-51, Ser-93, 111–112 (QK), Asn-140, and 179–181 (QPY) contribute to the NAD(+) site. Position 112 (Lys-112) interacts with substrate. Substrate contacts are provided by Gln-179, Asp-192, His-196, and Tyr-246.

This sequence belongs to the Gfo/Idh/MocA family.

It catalyses the reaction D-apiofuranose + NAD(+) = D-apionolactone + NADH + H(+). It participates in carbohydrate metabolism. Functionally, involved in catabolism of D-apiose. Catalyzes oxidation of D-apiose to D-apionolactone. This is D-apiose dehydrogenase from Paraburkholderia graminis (strain ATCC 700544 / DSM 17151 / LMG 18924 / NCIMB 13744 / C4D1M).